A 158-amino-acid polypeptide reads, in one-letter code: MAAAGAGPGPGPGAPPGLEAALQKLALRRKKVLSAEEMELFELAQAAGGAMDPDVFKILVDLLKLNVAPLAVFQMLKSMCAGQRVASDSQDPTAAPLPTPSVPETRGRNKGGGALGGGPALAERGGRDGPGQRMPRQPSASRLPKGGGPGRSPPRSGT.

The residue at position 34 (Ser34) is a Phosphoserine. The disordered stretch occupies residues 81 to 158; the sequence is AGQRVASDSQ…PGRSPPRSGT (78 aa). A compositionally biased stretch (gly residues) spans 110–119; it reads KGGGALGGGP. A Phosphoserine modification is found at Ser152.

The protein belongs to the MOZART2 family. As to quaternary structure, associates with the gamma-tubulin ring complex (gTuRC) consisting of TUBGCP2, TUBGCP3, TUBGCP4, TUBGCP5 and TUBGCP6 and gamma-tubulin TUBG1 or TUBG2; within the complex, interacts with TUBGCP2; the interaction plays a role in gTuRC activation.

Its subcellular location is the cytoplasm. The protein resides in the cytoskeleton. The protein localises to the microtubule organizing center. It localises to the centrosome. It is found in the spindle. Functionally, required for the recruitment and the assembly of the gamma-tubulin ring complex (gTuRC) at the centrosome. The gTuRC regulates the minus-end nucleation of alpha-beta tubulin heterodimers that grow into microtubule protafilaments, a critical step in centrosome duplication and spindle formation. This Bos taurus (Bovine) protein is Mitotic-spindle organizing protein 2 (MZT2).